Consider the following 618-residue polypeptide: MGSGLFKPRVHPDLRDVFSKMSFFDKIGFLFIHAFDKRNLWHKVPVPIGLLYLNTRRTLLEKYNLLAVGRSSHGALFDPKEFLYRTEDGKYNDPHNAEAGSQNTFFGRNMEPVDQQDELMSPDPFVVATKLLARREYKDTGKQFNILAAAWIQFMVHDWMDHMEDTGQIGITAPKEVANECPLKSFKFHPTKELPTNSDGIKIGHYNIRTAWWDGSAVYGNNEERAEKLRTYVDGKLVIGDDGLLLHKENGVALSGDIRNSWAGVSILQALFVKEHNAVCDAIKEEHPNLSDEELYRYAKLVTSAVIAKVHTIDWTVELLKTKTMRAAMRANWYGLLGKKIKDTFGHIGGPILGGLVGLKKPNNHGVPYSLTEEFTSVYRMHSLIPSTLKLRDPTGQPDANNSPPCLEDIDIGEMIGLKGEEQLSKIGFEKQALSMGYQACGALELWNYPSFFRNLIPQNLDGTNRSDRIDLAALEVYRDRERSVPRYNEFRRRLFLIPIKSWEDLTSDKDAIETIRAIYGDDVEKLDLLVGLMAEKKIKGFAISETAFNIFILMASRRLEADRFFTSNFNEETYTKKGMQWVKTTEGLRDVINRHYPEITAKWMKSSSAFSVWDADY.

Catalysis depends on H157, which acts as the Proton acceptor. D158 provides a ligand contact to Ca(2+). Position 162 (H162) interacts with heme b. Residues T210, W212, D214, and S216 each coordinate Ca(2+). A hexadecanoate-binding site is contributed by H311. Residues H382, R479, and R483 each contribute to the heme b site. Residue E599 participates in hexadecanoate binding.

It belongs to the peroxidase family. It depends on heme b as a cofactor. The cofactor is Ca(2+).

It carries out the reaction a 1,2-saturated fatty acid + O2 = a (2R)-2-hydroperoxy fatty acid. The catalysed reaction is (9Z,12Z)-octadecadienoate + O2 = (2R,9Z,12Z)-2-hydroperoxyoctadecadienoate. It catalyses the reaction hexadecanoate + O2 = (2R)-2-hydroperoxyhexadecanoate. The enzyme catalyses (9Z,12Z,15Z)-octadecatrienoate + O2 = (R)-2-hydroperoxy-(9Z,12Z,15Z)-octadecatrienoate. It carries out the reaction tetradecanoate + O2 = (2R)-2-hydroperoxytetradecanoate. The catalysed reaction is octadecanoate + O2 = (2R)-2-hydroperoxyoctadecanoate. It catalyses the reaction (9Z)-octadecenoate + O2 = (2R,9Z)-2-hydroperoxyoctadecenoate. Functionally, alpha-dioxygenase that catalyzes the primary oxygenation step of a variety of 14-20 carbon fatty acids, containing up to three unsaturated bonds, into their corresponding 2R-hydroperoxides. Involved in the production of oxylipins that function in cell signaling, wound healing, and protection from infection. This Oryza sativa subsp. japonica (Rice) protein is Alpha-dioxygenase PIOX.